Reading from the N-terminus, the 494-residue chain is Succinoglycan biosynthesis transport protein ExoT (494 aa).

Helical transmembrane passes span W16–A36, F44–G64, S82–A102, L105–I125, L157–A177, F215–I235, F253–F273, L297–F317, W321–C341, T343–I363, A384–F404, P421–A441, and V447–L467.

This sequence belongs to the polysaccharide synthase family.

It is found in the cell membrane. The protein operates within glycan metabolism; exopolysaccharide biosynthesis. This chain is Succinoglycan biosynthesis transport protein ExoT (exoT), found in Rhizobium meliloti (strain 1021) (Ensifer meliloti).